A 229-amino-acid polypeptide reads, in one-letter code: Potassium/proton antiporter CemA (229 aa).

Helical transmembrane passes span 6 to 26, 107 to 127, and 189 to 209; these read AFIPFFYFTSIVFLPWLISLC, ILHFSTNLISFVILSGYSFWG, and ILSGLVSTFPVILDTIFKYWI.

The protein belongs to the CemA family.

It is found in the plastid. The protein resides in the chloroplast inner membrane. The catalysed reaction is K(+)(in) + H(+)(out) = K(+)(out) + H(+)(in). In terms of biological role, contributes to K(+)/H(+) antiport activity by supporting proton efflux to control proton extrusion and homeostasis in chloroplasts in a light-dependent manner to modulate photosynthesis. Prevents excessive induction of non-photochemical quenching (NPQ) under continuous-light conditions. Indirectly promotes efficient inorganic carbon uptake into chloroplasts. The sequence is that of Potassium/proton antiporter CemA from Barbarea verna (Land cress).